A 502-amino-acid chain; its full sequence is MPNATEAGKATDPGHGEHTSENKSPEEGLQGAVPSFYTSASEAPIAPRGDGHYPSSCPVTHTREKIYAICSDYAFLNQATSVYKTPSLTRSACLPDNTSLSAGNTTRYIGISTSTSEIIYNEENNLENLSTGMGKLPLAWEIDKSEFDGVTTNLIHKSGNVKKQFSKKKTSDKKGRHQRECLHYSPLDDVKQRKVLDLRRWYCISRPQYKTSCGISSLISCWNFLYSIMGAGNLPPITQEEALHILGFQPPFEDIRFGPFTGNTTLMRWFRQINDHFHVKGCSYVLYKPHGKNKTAGETAPGALSKLTRGLKDESLAYIYHCQNHYFCPIGFEATPVKANKAFSRGPLSSQEVEYWILIGESSRKHPAIHCKRWADIVTDLNTQNPEFLDIRHLERGLQFRKTKKVGGNLHCIIAFQRLSWQRFGFWNFPFGTITQESQHPTHVPGIAKSESEDNISKKQHGRLGRSFSASFHQDSAWKNMSSIHERRNSGYHSFRDYNGND.

2 disordered regions span residues 1 to 32 (MPNA…LQGA) and 438 to 460 (SQHP…SKKQ). Residues 12 to 26 (DPGHGEHTSENKSPE) are compositionally biased toward basic and acidic residues.

This sequence belongs to the BIVM family.

Its subcellular location is the cytoplasm. The protein resides in the nucleus. The polypeptide is Basic immunoglobulin-like variable motif-containing protein (Bivm) (Mus musculus (Mouse)).